A 206-amino-acid polypeptide reads, in one-letter code: ATP synthase subunit b (206 aa).

Residues Val-14–Ala-34 form a helical membrane-spanning segment.

This sequence belongs to the ATPase B chain family. In terms of assembly, F-type ATPases have 2 components, F(1) - the catalytic core - and F(0) - the membrane proton channel. F(1) has five subunits: alpha(3), beta(3), gamma(1), delta(1), epsilon(1). F(0) has three main subunits: a(1), b(2) and c(10-14). The alpha and beta chains form an alternating ring which encloses part of the gamma chain. F(1) is attached to F(0) by a central stalk formed by the gamma and epsilon chains, while a peripheral stalk is formed by the delta and b chains.

Its subcellular location is the cell inner membrane. F(1)F(0) ATP synthase produces ATP from ADP in the presence of a proton or sodium gradient. F-type ATPases consist of two structural domains, F(1) containing the extramembraneous catalytic core and F(0) containing the membrane proton channel, linked together by a central stalk and a peripheral stalk. During catalysis, ATP synthesis in the catalytic domain of F(1) is coupled via a rotary mechanism of the central stalk subunits to proton translocation. In terms of biological role, component of the F(0) channel, it forms part of the peripheral stalk, linking F(1) to F(0). This Geobacter metallireducens (strain ATCC 53774 / DSM 7210 / GS-15) protein is ATP synthase subunit b.